A 457-amino-acid polypeptide reads, in one-letter code: Gamma-aminobutyric acid receptor subunit gamma-4 (457 aa).

Positions 1–21 (MPAMVLLLCLALGPALRSARC) are cleaved as a signal peptide. The Extracellular portion of the chain corresponds to 22–256 (ESTEEYDYDY…VSFDLSRRMG (235 aa)). Residues asparagine 35 and asparagine 112 are each glycosylated (N-linked (GlcNAc...) asparagine). Cysteines 173 and 187 form a disulfide. An N-linked (GlcNAc...) asparagine glycan is attached at asparagine 230. 3 consecutive transmembrane segments (helical) span residues 257 to 279 (YFAIQTYIPCILTVVLSWVSFWI), 283 to 305 (STPARTSLGITTVLTMTTLSTIS), and 317 to 339 (AMDLFVSVCFIFVFAALMEYATL). Residues 340 to 433 (NYLVGNKKPL…VRIHISRLDS (94 aa)) are Cytoplasmic-facing. The helical transmembrane segment at 434–457 (YSRVFFPTAFLLFNIVYWIAYLYL) threads the bilayer.

This sequence belongs to the ligand-gated ion channel (TC 1.A.9) family. Gamma-aminobutyric acid receptor (TC 1.A.9.5) subfamily. GABRG4 sub-subfamily. Generally pentameric. There are five types of GABA(A) receptor chains: alpha, beta, gamma, delta, and rho. In terms of tissue distribution, abundant in several brain regions, including the ectostriatum, nucleus rotundus and hyperstriatum ventrale.

It is found in the postsynaptic cell membrane. Its subcellular location is the cell membrane. GABA, the major inhibitory neurotransmitter in the vertebrate brain, mediates neuronal inhibition by binding to the GABA/benzodiazepine receptor and opening an integral chloride channel. The chain is Gamma-aminobutyric acid receptor subunit gamma-4 (GABRG4) from Gallus gallus (Chicken).